Consider the following 483-residue polypeptide: Phosphomethylpyrimidine synthase (483 aa).

Residues N97, M126, Y156, H192, 212 to 214 (SRG), 253 to 256 (DSLR), and E292 contribute to the substrate site. H296 lines the Zn(2+) pocket. Substrate is bound at residue Y319. H360 provides a ligand contact to Zn(2+). [4Fe-4S] cluster contacts are provided by C440, C443, and C448.

Belongs to the ThiC family. [4Fe-4S] cluster serves as cofactor.

The enzyme catalyses 5-amino-1-(5-phospho-beta-D-ribosyl)imidazole + S-adenosyl-L-methionine = 4-amino-2-methyl-5-(phosphooxymethyl)pyrimidine + CO + 5'-deoxyadenosine + formate + L-methionine + 3 H(+). The protein operates within cofactor biosynthesis; thiamine diphosphate biosynthesis. Catalyzes the synthesis of the hydroxymethylpyrimidine phosphate (HMP-P) moiety of thiamine from aminoimidazole ribotide (AIR) in a radical S-adenosyl-L-methionine (SAM)-dependent reaction. This Parasynechococcus marenigrum (strain WH8102) protein is Phosphomethylpyrimidine synthase.